Here is a 395-residue protein sequence, read N- to C-terminus: PCI domain-containing protein 2 homolog (395 aa).

Residues 208 to 389 enclose the PCI domain; sequence ITYKYFVGRR…NKLVVSKQNP (182 aa).

The protein belongs to the CSN12 family. Component of the nuclear pore complex (NPC)-associated TREX-2/AMEX complex (anchoring and mRNA export complex), composed of e(y)2, xmas and PCID2. Interaction between the TREX-2/AMEX complex and the ORC complex is required for ORC localization to mRNPs, and consequently mRNA export. Within the TREX-2/AMEX-ORC complex, interacts with Orc3 and Orc4. Interacts with sbr/NXF1. Interacts with Moe. Interacts with nudC; required to maintain stability in the cytoplasm. In terms of processing, mono- and poly-ubiquitinated.

It localises to the nucleus. The protein localises to the cytoplasm. The protein resides in the nucleus membrane. Its subcellular location is the cytoskeleton. In terms of biological role, required for the export of nuclear mRNAs and involved in mRNA trafficking in the cytoplasm. Component of the nuclear pore complex (NPC)-associated TREX-2/AMEX complex (anchoring and mRNA export complex) which functions in docking export-competent ribonucleoprotein particles (mRNPs) to the nuclear entrance of the nuclear pore complex (nuclear basket), thereby enabling the export of mRNAs to the cytoplasm through the nuclear pores. Within the complex, specifically promotes the association of factors involved in regulating nuclear mRNA export, such as Moe, sbr/NXF1 and the ORC complex, to the mRNPs particles. In the cytoplasm, functions independently of its role in the TREX-2/AMEX complex, to promote cytoplasmic mRNA trafficking together with nudC. Associates with translationally active polysomes. The chain is PCI domain-containing protein 2 homolog from Drosophila melanogaster (Fruit fly).